The primary structure comprises 510 residues: GMP synthase [glutamine-hydrolyzing] (510 aa).

Residues 5–195 (PILVVNFGSQ…IYGVCKAEKN (191 aa)) form the Glutamine amidotransferase type-1 domain. Cysteine 82 functions as the Nucleophile in the catalytic mechanism. Active-site residues include histidine 169 and glutamate 171. In terms of domain architecture, GMPS ATP-PPase spans 196–385 (WEMGDFIHEK…LGVPEEILRR (190 aa)). 223 to 229 (SGGVDST) serves as a coordination point for ATP.

In terms of assembly, homodimer.

The catalysed reaction is XMP + L-glutamine + ATP + H2O = GMP + L-glutamate + AMP + diphosphate + 2 H(+). Its pathway is purine metabolism; GMP biosynthesis; GMP from XMP (L-Gln route): step 1/1. Functionally, catalyzes the synthesis of GMP from XMP. The sequence is that of GMP synthase [glutamine-hydrolyzing] (guaA) from Aquifex aeolicus (strain VF5).